The following is a 386-amino-acid chain: Glycerate dehydrogenase HPR, peroxisomal (386 aa).

Residues 175–176 (RI), 271–273 (CSR), and Asp-297 contribute to the NAD(+) site. Arg-273 is a catalytic residue. Glu-302 is a catalytic residue. Catalysis depends on His-320, which acts as the Proton donor. Residue 320–323 (HIAS) coordinates NAD(+). A Microbody targeting signal motif is present at residues 384-386 (SKL).

The protein belongs to the D-isomer specific 2-hydroxyacid dehydrogenase family. As to expression, present in leaves (at protein level). Mostly expressed in photosynthetic tissues such as leaves, stems, flowers, buds, and, to a lower extent, in siliques and roots.

It is found in the peroxisome. It carries out the reaction (R)-glycerate + NAD(+) = 3-hydroxypyruvate + NADH + H(+). The protein operates within photosynthesis; photorespiration; 3-phospho-D-glycerate from glycine: step 3/4. With respect to regulation, slightly inhibited by oxalate. Functionally, catalyzes the NADH-dependent reduction of hydroxypyruvate into glycerate in the photorespiratory core cycle. Mediates fatty acid beta-oxidation in germinating seeds when malate dehydrogenase is absent. This chain is Glycerate dehydrogenase HPR, peroxisomal (HPR), found in Arabidopsis thaliana (Mouse-ear cress).